We begin with the raw amino-acid sequence, 469 residues long: Solute carrier family 52, riboflavin transporter, member 3 (469 aa).

Residues M1 to A2 are Cytoplasmic-facing. Residues F3–L23 traverse the membrane as a helical segment. The Extracellular portion of the chain corresponds to W24–Y43. The chain crosses the membrane as a helical span at residues L44 to F64. At R65 to E71 the chain is on the cytoplasmic side. Residues V72 to L92 form a helical membrane-spanning segment. The Extracellular segment spans residues W93–S97. N-linked (GlcNAc...) asparagine glycosylation is present at N94. The chain crosses the membrane as a helical span at residues W98–V118. The Cytoplasmic segment spans residues D119–Y137. The helical transmembrane segment at L138–A158 threads the bilayer. The Extracellular portion of the chain corresponds to Q159–P220. Residue N168 is glycosylated (N-linked (GlcNAc...) asparagine). A helical membrane pass occupies residues L221 to L241. The Cytoplasmic segment spans residues Q242–A292. S251 carries the phosphoserine modification. Residues A293 to L313 form a helical membrane-spanning segment. The Extracellular portion of the chain corresponds to T314–H335. A helical membrane pass occupies residues L336–P356. Topologically, residues N357 to S359 are cytoplasmic. Residues L360–M380 traverse the membrane as a helical segment. Residues A381 to E396 are Extracellular-facing. An intrachain disulfide couples C386 to C463. Residues V397–L417 form a helical membrane-spanning segment. The Cytoplasmic segment spans residues G418–S427. A helical transmembrane segment spans residues A428 to F448. Residues P449–A469 lie on the Extracellular side of the membrane.

This sequence belongs to the riboflavin transporter family. In terms of tissue distribution, predominantly expressed in testis. Highly expressed in small intestine and prostate.

The protein resides in the apical cell membrane. It is found in the cell membrane. It localises to the nucleus membrane. Its subcellular location is the cytoplasm. The enzyme catalyses riboflavin(in) = riboflavin(out). Its activity is regulated as follows. Activity is strongly inhibited by riboflavin analogs, such as lumiflavin, flavin mononucleotide (FMN), flavin adenine dinucleotide (FAD), by methylene blue, and to a lesser extent by amiloride. Riboflavin transport is Na(+)-independent at low pH but significantly reduced by Na(+) depletion under neutral pH conditions. Its function is as follows. Plasma membrane transporter mediating the uptake by cells of the water soluble vitamin B2/riboflavin that plays a key role in biochemical oxidation-reduction reactions of the carbohydrate, lipid, and amino acid metabolism. Humans are unable to synthesize vitamin B2/riboflavin and must obtain it via intestinal absorption. The protein is Solute carrier family 52, riboflavin transporter, member 3 (SLC52A3) of Homo sapiens (Human).